Consider the following 192-residue polypeptide: Ion-translocating oxidoreductase complex subunit B (192 aa).

The segment at 1-26 (MNAIWIAVAAVSLLGLAFGAILGYAS) is hydrophobic. In terms of domain architecture, 4Fe-4S spans 32-91 (EDDPVVEKIDEILPQSQCGQCGYPGCRPYAEAISCNGEKINRCAPGGEAVMLKIAELLNV). Cys-49, Cys-52, Cys-57, Cys-74, Cys-117, Cys-120, Cys-123, Cys-127, Cys-147, Cys-150, Cys-153, and Cys-157 together coordinate [4Fe-4S] cluster. 2 4Fe-4S ferredoxin-type domains span residues 108-137 (MVAVIDENNCIGCTKCIQACPVDAIVGATR) and 138-167 (AMHTVMSDLCTGCNLCVDPCPTHCISLQPV).

The protein belongs to the 4Fe4S bacterial-type ferredoxin family. RnfB subfamily. In terms of assembly, the complex is composed of six subunits: RsxA, RsxB, RsxC, RsxD, RsxE and RsxG. [4Fe-4S] cluster is required as a cofactor.

The protein localises to the cell inner membrane. Part of a membrane-bound complex that couples electron transfer with translocation of ions across the membrane. Required to maintain the reduced state of SoxR. The sequence is that of Ion-translocating oxidoreductase complex subunit B from Escherichia coli O127:H6 (strain E2348/69 / EPEC).